A 107-amino-acid chain; its full sequence is Replication restart protein PriB (107 aa).

The region spanning 1-97 (MNTLELSARV…LHLQQARRIA (97 aa)) is the SSB domain.

It belongs to the PriB family. Homodimer. Interacts with PriA and DnaT. Component of the replication restart primosome. Primosome assembly occurs via a 'hand-off' mechanism. PriA binds to replication forks, subsequently PriB then DnaT bind; DnaT then displaces ssDNA to generate the helicase loading substrate.

Its function is as follows. Involved in the restart of stalled replication forks, which reloads the replicative helicase on sites other than the origin of replication; the PriA-PriB pathway is the major replication restart pathway. During primosome assembly it facilitates complex formation between PriA and DnaT on DNA; stabilizes PriA on DNA. Stimulates the DNA unwinding activity of PriA helicase. This chain is Replication restart protein PriB, found in Bordetella parapertussis (strain 12822 / ATCC BAA-587 / NCTC 13253).